A 320-amino-acid chain; its full sequence is Ferrochelatase (320 aa).

Residues H194 and E275 each coordinate Fe cation.

Belongs to the ferrochelatase family.

It is found in the cytoplasm. It carries out the reaction heme b + 2 H(+) = protoporphyrin IX + Fe(2+). The protein operates within porphyrin-containing compound metabolism; protoheme biosynthesis; protoheme from protoporphyrin-IX: step 1/1. Functionally, catalyzes the ferrous insertion into protoporphyrin IX. The sequence is that of Ferrochelatase from Vibrio atlanticus (strain LGP32) (Vibrio splendidus (strain Mel32)).